Consider the following 25-residue polypeptide: M-poneritoxin-Nc2a (25 aa).

This sequence belongs to the ponericin-L family. In terms of tissue distribution, expressed by the venom gland.

It localises to the secreted. The protein localises to the target cell membrane. Its function is as follows. Membrane-perturbating peptide with multiple activities. It is insecticidal, since it induces reversible paralysis in insects (L.cuprina) after 1 hour, but fails to kill them. It shows moderate antibacterial activity against some Gram-positive and Gram-negative bacteria. It is also antiparasitic, since it moderately inhibits the larval development of the major pathogenic nematode of ruminants (H.contortus, IC(50)=23.2 uM), but fails to reduce the motility of adult males of the other nematode B.malayi. It also shows moderate cytotoxic activity against HEK293 cells (EC(50)=48-57 uM) but does not induce hemolysis in human erythrocytes. It also causes a moderate increase in intracellular calcium concentration on neuronal and epithelial cell lines, which supports a non-specific membrane perturbation mechanism of action. The polypeptide is M-poneritoxin-Nc2a (Neoponera commutata (Large hunting ant)).